The following is a 771-amino-acid chain: Tetratricopeptide repeat-containing protein trd-1 (771 aa).

TPR repeat units follow at residues 389–415 (LEMW…IRRL), 416–449 (IEQK…SDDR), 451–484 (ARAH…QPIQ), 485–518 (LGTW…QPDH), 520–552 (EAWN…NYEH), and 553–586 (PNVW…NKRG).

This sequence belongs to the TTC27 family. Expressed in the spermatheca.

The protein localises to the cytoplasm. Functionally, developmental protein required for cell fate determination in both the germline and seam cells of the developing epidermis. Specifically, involved in sex determination and may function in parallel or downstream of other sex determination factors, including tra-2 and fem-3, to promote oogenesis in its role in the regulation of the switch from spermatogenesis to oogenesis in the gonads. Also implicated in the mitosis to meiosis switch in distal tip cells. This chain is Tetratricopeptide repeat-containing protein trd-1, found in Caenorhabditis elegans.